Here is a 396-residue protein sequence, read N- to C-terminus: Probable sugar efflux transporter (396 aa).

The next 12 helical transmembrane spans lie at 15 to 35, 50 to 70, 81 to 101, 103 to 123, 136 to 156, 169 to 189, 209 to 229, 246 to 266, 275 to 295, 301 to 321, 333 to 353, and 364 to 384; these read VVTL…PVGL, VGIM…PFML, LICL…AWNF, VLVI…SITA, AQAL…GLPI, TFFA…KLLP, PALM…YTAY, FATV…LVFG, SLVS…LPAA, LAIL…GMQV, VAMA…ALVG, and AIGY…VLIF.

Belongs to the major facilitator superfamily. SotB (TC 2.A.1.2) family.

Its subcellular location is the cell inner membrane. Involved in the efflux of sugars. The physiological role may be the reduction of the intracellular concentration of toxic sugars or sugar metabolites. This is Probable sugar efflux transporter from Salmonella agona (strain SL483).